We begin with the raw amino-acid sequence, 198 residues long: Carnitine operon protein CaiE (198 aa).

The tract at residues 179-198 is disordered; it reads VEENRPRLKGTTDVKPKSAQ. Over residues 180 to 198 the composition is skewed to basic and acidic residues; the sequence is EENRPRLKGTTDVKPKSAQ.

The protein belongs to the transferase hexapeptide repeat family.

Its pathway is amine and polyamine metabolism; carnitine metabolism. Overproduction of CaiE stimulates the activity of CaiB and CaiD. In Salmonella choleraesuis (strain SC-B67), this protein is Carnitine operon protein CaiE.